The sequence spans 360 residues: MTTIQQQRSSLLKGWPQFCEWVTSTNNRIYVGWFGVLMIPCLLAATTCFIVAFIAAPPVDIDGIREPVAGSFMYGNNIISGAVVPSSNAIGLHFYPIWEAATLDEWLYNGGPYQLVIFHFLIGISAYMGRQWELSYRLGMRPWICVAYSAPVSAAFAVFLVYPFGQGSFSDGMPLGISGTFNFMFVFQAEHNILMHPFHMAGVAGMFGGALFSAMHGSLVTSSLIRETTGLDSQNYGYKFGQEEETYNIVAAHGYFGRLIFQYASFNNSRSLHFFLASWPVICVWLTSMGICTMAFNLNGFNFNQSVVDTSGKVVPTWGDVLNRANLGMEVMHERNAHNFPLDLAAAESTSVALVAPAIG.

3 consecutive transmembrane segments (helical) span residues Y30 to T47, H119 to L134, and W143 to A157. Chlorophyll a is bound at residue H119. Pheophytin a is bound at residue Y127. Residues D171 and E190 each contribute to the [CaMn4O5] cluster site. A helical membrane pass occupies residues F198–L219. H199 serves as a coordination point for chlorophyll a. A quinone is bound by residues H216 and S265–F266. H216 lines the Fe cation pocket. H273 contacts Fe cation. Residues F275–M289 form a helical membrane-spanning segment. H333, E334, D343, and A345 together coordinate [CaMn4O5] cluster. Residues A346 to G360 constitute a propeptide that is removed on maturation.

Belongs to the reaction center PufL/M/PsbA/D family. In terms of assembly, PSII is composed of 1 copy each of membrane proteins PsbA, PsbB, PsbC, PsbD, PsbE, PsbF, PsbH, PsbI, PsbJ, PsbK, PsbL, PsbM, PsbT, PsbX, PsbY, Psb30/Ycf12, peripheral proteins PsbO, CyanoQ (PsbQ), PsbU, PsbV and a large number of cofactors. It forms dimeric complexes. The D1/D2 heterodimer binds P680, chlorophylls that are the primary electron donor of PSII, and subsequent electron acceptors. It shares a non-heme iron and each subunit binds pheophytin, quinone, additional chlorophylls, carotenoids and lipids. D1 provides most of the ligands for the Mn4-Ca-O5 cluster of the oxygen-evolving complex (OEC). There is also a Cl(-1) ion associated with D1 and D2, which is required for oxygen evolution. The PSII complex binds additional chlorophylls, carotenoids and specific lipids. serves as cofactor. Tyr-162 forms a radical intermediate that is referred to as redox-active TyrZ, YZ or Y-Z. Post-translationally, C-terminally processed by CtpA; processing is essential to allow assembly of the oxygen-evolving complex and thus photosynthetic growth.

It localises to the cellular thylakoid membrane. The catalysed reaction is 2 a plastoquinone + 4 hnu + 2 H2O = 2 a plastoquinol + O2. In terms of biological role, photosystem II (PSII) is a light-driven water:plastoquinone oxidoreductase that uses light energy to abstract electrons from H(2)O, generating O(2) and a proton gradient subsequently used for ATP formation. It consists of a core antenna complex that captures photons, and an electron transfer chain that converts photonic excitation into a charge separation. The D1/D2 (PsbA/PsbD) reaction center heterodimer binds P680, the primary electron donor of PSII as well as several subsequent electron acceptors. The protein is Photosystem II protein D1 of Prochlorococcus marinus (strain NATL1A).